A 340-amino-acid polypeptide reads, in one-letter code: Gigasin-2 (340 aa).

An N-terminal signal peptide occupies residues 1–21 (MNKMSPLYVLALCCLATTVFA). 2 EGF-like domains span residues 22–57 (KYDCTNNGGYGCKYGGTCHFYGFCICPKGFQGEDCG) and 65–97 (TAANCTAECKNGGTCYESDRCYCPHGFIGDMCE). 6 disulfide bridges follow: cysteine 25–cysteine 39, cysteine 33–cysteine 45, cysteine 47–cysteine 56, cysteine 69–cysteine 79, cysteine 73–cysteine 85, and cysteine 87–cysteine 96.

As to expression, component of the organic matrix of calcified shell layers.

This is Gigasin-2 from Magallana gigas (Pacific oyster).